Reading from the N-terminus, the 65-residue chain is Large ribosomal subunit protein bL28 (65 aa).

The disordered stretch occupies residues Met-1 to Ser-21.

This sequence belongs to the bacterial ribosomal protein bL28 family.

This is Large ribosomal subunit protein bL28 from Mycoplasma pneumoniae (strain ATCC 29342 / M129 / Subtype 1) (Mycoplasmoides pneumoniae).